The chain runs to 339 residues: Biotin synthase (339 aa).

Residues 55–288 enclose the Radical SAM core domain; it reads LSEGALHSCS…GKIIKFAAGR (234 aa). 3 residues coordinate [4Fe-4S] cluster: C73, C77, and C80. The [2Fe-2S] cluster site is built by C152, C213, and K283.

This sequence belongs to the radical SAM superfamily. Biotin synthase family. As to quaternary structure, homodimer. [4Fe-4S] cluster serves as cofactor. It depends on [2Fe-2S] cluster as a cofactor.

The enzyme catalyses (4R,5S)-dethiobiotin + (sulfur carrier)-SH + 2 reduced [2Fe-2S]-[ferredoxin] + 2 S-adenosyl-L-methionine = (sulfur carrier)-H + biotin + 2 5'-deoxyadenosine + 2 L-methionine + 2 oxidized [2Fe-2S]-[ferredoxin]. It functions in the pathway cofactor biosynthesis; biotin biosynthesis; biotin from 7,8-diaminononanoate: step 2/2. Functionally, catalyzes the conversion of dethiobiotin (DTB) to biotin by the insertion of a sulfur atom into dethiobiotin via a radical-based mechanism. The protein is Biotin synthase of Chlorobium phaeobacteroides (strain BS1).